Reading from the N-terminus, the 190-residue chain is MLEILKKSLKKAPIVKRGKYPYFIHPITDGVPAIDPKLLDEISDYIIEYSDMDVDRILSIEAMGIPLATAISLKTGIPFSIVRKRQYQLPGEIKISQSTGYSKGELYINGIEKGNRILLVDDVISTGGTLRFLVKALEEKGVTISDIIVIVGRGDGVQQLAGEGIRVKTLVDINVSEDGVSILEDTGETN.

Belongs to the purine/pyrimidine phosphoribosyltransferase family. Archaeal HPRT subfamily. As to quaternary structure, homodimer.

The protein resides in the cytoplasm. The catalysed reaction is IMP + diphosphate = hypoxanthine + 5-phospho-alpha-D-ribose 1-diphosphate. The enzyme catalyses GMP + diphosphate = guanine + 5-phospho-alpha-D-ribose 1-diphosphate. The protein operates within purine metabolism; IMP biosynthesis via salvage pathway; IMP from hypoxanthine: step 1/1. Its function is as follows. Catalyzes a salvage reaction resulting in the formation of IMP that is energically less costly than de novo synthesis. The polypeptide is Hypoxanthine/guanine phosphoribosyltransferase (Methanohalophilus mahii (strain ATCC 35705 / DSM 5219 / SLP)).